Consider the following 1780-residue polypeptide: Chitin synthase Vb (1780 aa).

Residues Asn133, Asn153, Asn629, Asn644, Asn655, and Asn660 are each glycosylated (N-linked (GlcNAc...) asparagine). The next 2 membrane-spanning stretches (helical) occupy residues 740–760 (AWIAFVWALTFWIPSPLLKFI) and 776–796 (FVLFFLIILINGMVVFWIIGF). The Cytochrome b5 heme-binding domain occupies 805–866 (NKAWNVKEVA…LSGMVMDNYF (62 aa)). N-linked (GlcNAc...) asparagine glycosylation is found at Asn888 and Asn1009. The chain crosses the membrane as a helical span at residues 1046-1066 (LLLAFAIIICIVTAVKFLAAL). N-linked (GlcNAc...) asparagine glycosylation occurs at Asn1411. 3 helical membrane-spanning segments follow: residues 1442–1462 (LCGTIILPSTCVYIGYLIYIL), 1469–1489 (IPYISLAMIGAVYGLQALIFI), and 1497–1517 (IGWMIIYILAFPIYSFILPLY). A glycan (N-linked (GlcNAc...) asparagine) is linked at Asn1524. The tract at residues 1649 to 1691 (TGVHDMRSQSPYQDYPGQHPSVSNLRGQANLSPATGGGHSRSG) is disordered. Residues 1668–1681 (PSVSNLRGQANLSP) are compositionally biased toward polar residues. In terms of domain architecture, DEK-C spans 1722-1778 (GPNDMAIVESIRSVLCEVDLDTVTKKQVRALVEQRLQTELVGERRTFMDRQIDHELE).

It belongs to the chitin synthase family. Class VII subfamily.

It is found in the cell membrane. The catalysed reaction is [(1-&gt;4)-N-acetyl-beta-D-glucosaminyl](n) + UDP-N-acetyl-alpha-D-glucosamine = [(1-&gt;4)-N-acetyl-beta-D-glucosaminyl](n+1) + UDP + H(+). Functionally, polymerizes chitin, a structural polymer of the cell wall and septum, by transferring the sugar moiety of UDP-GlcNAc to the non-reducing end of the growing chitin polymer. ChsV and chsVb do perform additive, but not redundant, functions in septum formation. Functions not only in the maintenance of cell wall integrity under different osmotic conditions but also in polarized cell wall synthesis. Plays an important role in the complex infection process of this fungus. This is Chitin synthase Vb from Fusarium oxysporum f. sp. lycopersici (strain 4287 / CBS 123668 / FGSC 9935 / NRRL 34936) (Fusarium vascular wilt of tomato).